The following is a 395-amino-acid chain: Na(+)/H(+) antiporter NhaA (395 aa).

The next 11 helical transmembrane spans lie at 15 to 35 (FLGSPSGGACVLLLASLAGFV), 66 to 86 (IDAWVSDGFMTLFFLVVILEI), 101 to 121 (VALPLIGALGGMIVPALTYLL), 132 to 152 (GWAIPVATDAAFTLPIILALG), 161 to 181 (AWLMALAIFDDVLGIVVIAVF), 184 to 204 (NALYWPALAAAVVVTAALIGA), 219 to 239 (CILLWIALLGSGLHPTLAGVI), 265 to 285 (ALTPVVTWVILPLFGFMNVGV), 301 to 321 (LGIMSGLLIGKPVGVFSATLL), 339 to 359 (VFGLSLLCGIGFTISLFIANL), and 366 to 386 (LVIPAKMGIFAGSVLSALAGW).

Belongs to the NhaA Na(+)/H(+) (TC 2.A.33) antiporter family.

The protein localises to the cell inner membrane. It carries out the reaction Na(+)(in) + 2 H(+)(out) = Na(+)(out) + 2 H(+)(in). Functionally, na(+)/H(+) antiporter that extrudes sodium in exchange for external protons. This is Na(+)/H(+) antiporter NhaA from Gluconacetobacter diazotrophicus (strain ATCC 49037 / DSM 5601 / CCUG 37298 / CIP 103539 / LMG 7603 / PAl5).